The primary structure comprises 173 residues: Lens fiber membrane intrinsic protein (173 aa).

The Cytoplasmic portion of the chain corresponds to Met1 to Ser3. A helical transmembrane segment spans residues Phe4–Ala24. The Extracellular portion of the chain corresponds to Thr25–Ala66. C-linked (Man) tryptophan; partial glycosylation is found at Trp43 and Trp61. The helical transmembrane segment at Phe67–Ala87 threads the bilayer. The Cytoplasmic portion of the chain corresponds to Gln88–Pro98. Residues Phe99–Tyr119 traverse the membrane as a helical segment. Topologically, residues Thr120–Tyr140 are extracellular. Residues Ile141–Tyr161 traverse the membrane as a helical segment. Over Arg162–Arg173 the chain is Cytoplasmic. Residue Ser170 is modified to Phosphoserine. Thr171 is subject to Phosphothreonine.

This sequence belongs to the PMP-22/EMP/MP20 family. As to quaternary structure, seems to be associated with itself or another lens membrane component via disulfide bonds. In terms of processing, predominantly monophosphorylated on Ser-170. Only about 15% diphosphorylated on both Ser-170 and Thr-171. Post-translationally, C-glycosylated. Trp-43 is more extensively C-glycosylated than Trp-61. C-glycosylation may be involved in membrane trafficking. As to expression, eye lens specific.

It localises to the membrane. Present in the thicker 16-17 nm junctions of mammalian lens fiber cells, where it may contribute to cell junctional organization. Acts as a receptor for calmodulin. May play an important role in both lens development and cataractogenesis. This chain is Lens fiber membrane intrinsic protein (LIM2), found in Bos taurus (Bovine).